We begin with the raw amino-acid sequence, 469 residues long: Acetyl-CoA decarbonylase/synthase complex subunit beta 1 (469 aa).

Cys189, Cys192, Cys278, and Cys280 together coordinate [Ni-Fe-S] cluster.

Belongs to the CdhC family. Monomer. The ACDS complex is made up of alpha, epsilon, beta, gamma and delta chains with a probable stoichiometry of (alpha(2)epsilon(2))(4)-beta(8)-(gamma(1)delta(1))(8) (Potential). Requires [Ni-Fe-S] cluster as cofactor.

The catalysed reaction is Co(I)-[corrinoid Fe-S protein] + acetyl-CoA + H(+) = methyl-Co(III)-[corrinoid Fe-S protein] + CO + CoA. Its pathway is one-carbon metabolism; methanogenesis from acetate. Part of a complex that catalyzes the reversible cleavage of acetyl-CoA, allowing growth on acetate as sole source of carbon and energy. The alpha-epsilon complex generates CO from CO(2), while the beta subunit (this protein) combines the CO with CoA and a methyl group to form acetyl-CoA. The methyl group, which is incorporated into acetyl-CoA, is transferred to the beta subunit by a corrinoid iron-sulfur protein (the gamma-delta complex). This is Acetyl-CoA decarbonylase/synthase complex subunit beta 1 (cdhC1) from Methanosarcina mazei (strain ATCC BAA-159 / DSM 3647 / Goe1 / Go1 / JCM 11833 / OCM 88) (Methanosarcina frisia).